Consider the following 188-residue polypeptide: GTPase KRas (188 aa).

GTP-binding positions include 10 to 18 (GAGGVGKSA), 29 to 35 (VDEYDPT), 59 to 60 (AG), and 116 to 119 (NKCD). An Effector region motif is present at residues 32 to 40 (YDPTIEDSY). Positions 167 to 188 (KEKMSKEGKKKKKKSKTKCILM) are disordered. Position 185 is a cysteine methyl ester (C185). Residue C185 is the site of S-farnesyl cysteine attachment. The propeptide at 186-188 (ILM) is removed in mature form.

This sequence belongs to the small GTPase superfamily. Ras family.

The protein resides in the cell membrane. Its subcellular location is the cytoplasm. It catalyses the reaction GTP + H2O = GDP + phosphate + H(+). Its activity is regulated as follows. Alternates between an inactive form bound to GDP and an active form bound to GTP. Activated by a guanine nucleotide-exchange factor (GEF) and inactivated by a GTPase-activating protein (GAP). Its function is as follows. Ras proteins bind GDP/GTP and possess intrinsic GTPase activity. Plays an important role in the regulation of cell proliferation. This is GTPase KRas (kras1) from Oryzias latipes (Japanese rice fish).